A 337-amino-acid chain; its full sequence is DNA-directed RNA polymerase subunit alpha (337 aa).

The alpha N-terminal domain (alpha-NTD) stretch occupies residues 1-233 (MVREEVAVST…DLFIPFLHAE (233 aa)). The alpha C-terminal domain (alpha-CTD) stretch occupies residues 266–337 (GIALKCIFID…FTIDLPKNKF (72 aa)).

It belongs to the RNA polymerase alpha chain family. In plastids the minimal PEP RNA polymerase catalytic core is composed of four subunits: alpha, beta, beta', and beta''. When a (nuclear-encoded) sigma factor is associated with the core the holoenzyme is formed, which can initiate transcription.

It localises to the plastid. Its subcellular location is the chloroplast. The catalysed reaction is RNA(n) + a ribonucleoside 5'-triphosphate = RNA(n+1) + diphosphate. In terms of biological role, DNA-dependent RNA polymerase catalyzes the transcription of DNA into RNA using the four ribonucleoside triphosphates as substrates. This Liriodendron tulipifera (Tuliptree) protein is DNA-directed RNA polymerase subunit alpha.